A 73-amino-acid polypeptide reads, in one-letter code: Putative defensin-like protein 270 (73 aa).

The first 23 residues, 1–23 (MMSSKSHFVALLLIIFLIVNVQS), serve as a signal peptide directing secretion. 4 cysteine pairs are disulfide-bonded: C33-C72, C39-C60, C45-C70, and C49-C71.

Belongs to the DEFL family.

The protein resides in the secreted. This chain is Putative defensin-like protein 270, found in Arabidopsis thaliana (Mouse-ear cress).